The following is a 588-amino-acid chain: Sperm-associated microtubule inner protein 4 (588 aa).

The residue at position 219 (T219) is a Phosphothreonine. 5 positions are modified to phosphoserine: S224, S406, S421, S427, and S437. A Phosphotyrosine modification is found at Y441. S457 and S484 each carry phosphoserine. Residue T512 is modified to Phosphothreonine. At S516 the chain carries Phosphoserine. K543 is covalently cross-linked (Glycyl lysine isopeptide (Lys-Gly) (interchain with G-Cter in SUMO2)). S545 is modified (phosphoserine).

The protein localises to the cytoplasm. It is found in the cytoskeleton. It localises to the microtubule organizing center. Its subcellular location is the centrosome. The protein resides in the flagellum axoneme. Microtubule inner protein (MIP) part of the dynein-decorated doublet microtubules (DMTs) in flagellum axoneme. May serve to reinforce and thus stabilize the microtubule structure in the sperm flagella. The sequence is that of Sperm-associated microtubule inner protein 4 (Spmip4) from Rattus norvegicus (Rat).